The primary structure comprises 287 residues: Ribosomal RNA small subunit methyltransferase A (287 aa).

The S-adenosyl-L-methionine site is built by asparagine 28, leucine 30, glycine 55, glutamate 76, aspartate 101, and asparagine 125.

This sequence belongs to the class I-like SAM-binding methyltransferase superfamily. rRNA adenine N(6)-methyltransferase family. RsmA subfamily.

The protein resides in the cytoplasm. The enzyme catalyses adenosine(1518)/adenosine(1519) in 16S rRNA + 4 S-adenosyl-L-methionine = N(6)-dimethyladenosine(1518)/N(6)-dimethyladenosine(1519) in 16S rRNA + 4 S-adenosyl-L-homocysteine + 4 H(+). Its function is as follows. Specifically dimethylates two adjacent adenosines (A1518 and A1519) in the loop of a conserved hairpin near the 3'-end of 16S rRNA in the 30S particle. May play a critical role in biogenesis of 30S subunits. The chain is Ribosomal RNA small subunit methyltransferase A from Alkaliphilus oremlandii (strain OhILAs) (Clostridium oremlandii (strain OhILAs)).